A 146-amino-acid chain; its full sequence is Globin-1 (146 aa).

The Globin domain maps to 9–146; it reads QLTADVKKDL…KLVAVVQAAL (138 aa). Residue His-101 coordinates heme b.

It belongs to the globin family. Homodimer.

It localises to the cytoplasm. This Anadara inaequivalvis (Inequivalve ark) protein is Globin-1.